The sequence spans 393 residues: Pyridoxamine--pyruvate transaminase (393 aa).

Pyridoxal 5'-phosphate is bound by residues glutamate 68, tyrosine 95, and threonine 146. Lysine 197 carries the post-translational modification N6-(pyridoxal phosphate)lysine. Residue arginine 345 coordinates pyridoxal 5'-phosphate.

This sequence belongs to the class-V pyridoxal-phosphate-dependent aminotransferase family. In terms of assembly, homotetramer. Pyridoxal 5'-phosphate serves as cofactor.

The catalysed reaction is pyridoxamine + pyruvate = pyridoxal + L-alanine. Catalyzes a reversible transamination reaction between pyridoxamine and pyruvate to form pyridoxal and L-alanine. This Mesorhizobium japonicum (strain LMG 29417 / CECT 9101 / MAFF 303099) (Mesorhizobium loti (strain MAFF 303099)) protein is Pyridoxamine--pyruvate transaminase (ppaT).